The following is a 58-amino-acid chain: Curromycin resistance protein (58 aa).

The segment at Met-1–Arg-37 is disordered. Low complexity predominate over residues Pro-25–Arg-37.

This chain is Curromycin resistance protein (cre), found in Streptomyces hygroscopicus.